The following is a 313-amino-acid chain: Formimidoylglutamase (313 aa).

Residues His130, Asp155, His157, Asp159, Asp241, and Asp243 each contribute to the Mn(2+) site.

This sequence belongs to the arginase family. The cofactor is Mn(2+).

The catalysed reaction is N-formimidoyl-L-glutamate + H2O = formamide + L-glutamate. The protein operates within amino-acid degradation; L-histidine degradation into L-glutamate; L-glutamate from N-formimidoyl-L-glutamate (hydrolase route): step 1/1. Its function is as follows. Catalyzes the conversion of N-formimidoyl-L-glutamate to L-glutamate and formamide. The chain is Formimidoylglutamase from Salmonella agona (strain SL483).